The sequence spans 816 residues: H(+)/Cl(-) exchange transporter 5 (816 aa).

Residues 1-124 (MAMWQGAMDN…WALIHSVSDA (124 aa)) are Cytoplasmic-facing. 2 helical membrane passes run 125-162 (FSGW…ICTG) and 208-231 (VNYF…VKAF). The short motif at 237–241 (GSGIP) is the Selectivity filter part_1 element. Serine 238 serves as a coordination point for chloride. Residues 240 to 247 (IPEIKTIL) constitute an intramembrane region (helical). 2 helical membrane passes run 256–275 (LGKW…VSSG) and 281–300 (EGPL…HCFN). The Selectivity filter part_2 signature appears at 279–283 (GKEGP). 2 intramembrane regions (helical) span residues 312–324 (VLSA…VSVA) and 328–336 (PIGGVLFSL). 5 consecutive transmembrane segments (helical) span residues 348-366 (LWRS…RSIN), 389-414 (LVPF…IAWC), 422-442 (LGKY…ILAF), 498-518 (MWQL…TFGM), and 523-542 (GLFI…LGVG). The Selectivity filter part_3 signature appears at 523–527 (GLFIP). Chloride is bound at residue phenylalanine 525. The segment at residues 570–584 (GLYAMVGAAACLGGV) is an intramembrane region (helical). The note=Loop between two helices intramembrane region spans 585 to 587 (TRM). The helical intramembrane region spans 588–599 (TVSLVVIMFELT). Positions 600-604 (GGLEY) form an intramembrane region, note=Loop between two helices. The chain crosses the membrane as a helical span at residues 605 to 622 (IVPLMAAAMTSKWVADAL). Residues 623-816 (GREGIYDAHI…NQDPESILFN (194 aa)) are Cytoplasmic-facing. A chloride-binding site is contributed by tyrosine 628. CBS domains follow at residues 656 to 720 (MKPR…ARKK) and 752 to 811 (ILDL…QDPE). Residues threonine 666, 687–689 (YSG), and 794–797 (TKKD) contribute to the ATP site.

It belongs to the chloride channel (TC 2.A.49) family. ClC-5/CLCN5 subfamily. As to quaternary structure, interacts with NEDD4 and NEDD4L. Ubiquitinated by NEDD4L in the presence of albumin; which promotes endocytosis and proteasomal degradation. Kidney specific.

The protein resides in the golgi apparatus membrane. It localises to the endosome membrane. The protein localises to the cell membrane. The enzyme catalyses 2 chloride(in) + H(+)(out) = 2 chloride(out) + H(+)(in). In terms of biological role, proton-coupled chloride transporter. Functions as antiport system and exchanges chloride ions against protons. Important for normal acidification of the endosome lumen. May play an important role in renal tubular function. The CLC channel family contains both chloride channels and proton-coupled anion transporters that exchange chloride or another anion for protons. The absence of conserved gating glutamate residues is typical for family members that function as channels. This Rattus norvegicus (Rat) protein is H(+)/Cl(-) exchange transporter 5 (Clcn5).